A 161-amino-acid polypeptide reads, in one-letter code: Peroxynitrite isomerase 2 (161 aa).

Residues 17-23 (GTWTGRG) carry the GXWXGXG motif. Heme b is bound at residue H152.

It belongs to the nitrobindin family. In terms of assembly, homodimer. Heme b is required as a cofactor.

It carries out the reaction peroxynitrite = nitrate. It functions in the pathway nitrogen metabolism. Its function is as follows. Heme-binding protein able to scavenge peroxynitrite and to protect free L-tyrosine against peroxynitrite-mediated nitration, by acting as a peroxynitrite isomerase that converts peroxynitrite to nitrate. Therefore, this protein likely plays a role in peroxynitrite sensing and in the detoxification of reactive nitrogen and oxygen species (RNS and ROS, respectively). Is able to bind nitric oxide (NO) in vitro, but may act as a sensor of peroxynitrite levels in vivo. In Mycobacterium avium (strain 104), this protein is Peroxynitrite isomerase 2.